The sequence spans 467 residues: Glycogen synthase (467 aa).

Lysine 15 provides a ligand contact to ADP-alpha-D-glucose.

The protein belongs to the glycosyltransferase 1 family. Bacterial/plant glycogen synthase subfamily.

It carries out the reaction [(1-&gt;4)-alpha-D-glucosyl](n) + ADP-alpha-D-glucose = [(1-&gt;4)-alpha-D-glucosyl](n+1) + ADP + H(+). Its pathway is glycan biosynthesis; glycogen biosynthesis. Functionally, synthesizes alpha-1,4-glucan chains using ADP-glucose. The polypeptide is Glycogen synthase (Desulfitobacterium hafniense (strain DSM 10664 / DCB-2)).